The primary structure comprises 529 residues: Peptide chain release factor 3 (529 aa).

The region spanning 11-280 is the tr-type G domain; the sequence is AKRRTFAIIS…GLVEWAPAPM (270 aa). Residues 20 to 27, 88 to 92, and 142 to 145 each bind GTP; these read SHPDAGKT, DTPGH, and NKLD.

This sequence belongs to the TRAFAC class translation factor GTPase superfamily. Classic translation factor GTPase family. PrfC subfamily.

It localises to the cytoplasm. Its function is as follows. Increases the formation of ribosomal termination complexes and stimulates activities of RF-1 and RF-2. It binds guanine nucleotides and has strong preference for UGA stop codons. It may interact directly with the ribosome. The stimulation of RF-1 and RF-2 is significantly reduced by GTP and GDP, but not by GMP. The polypeptide is Peptide chain release factor 3 (Escherichia coli O8 (strain IAI1)).